A 428-amino-acid polypeptide reads, in one-letter code: Chaperone SurA (428 aa).

Residues Met1 to Ala20 form the signal peptide. PpiC domains lie at Ser171 to Asp272 and Val282 to Asp382.

The protein localises to the periplasm. It carries out the reaction [protein]-peptidylproline (omega=180) = [protein]-peptidylproline (omega=0). Functionally, chaperone involved in the correct folding and assembly of outer membrane proteins. Recognizes specific patterns of aromatic residues and the orientation of their side chains, which are found more frequently in integral outer membrane proteins. May act in both early periplasmic and late outer membrane-associated steps of protein maturation. This chain is Chaperone SurA, found in Escherichia coli O157:H7.